Here is a 205-residue protein sequence, read N- to C-terminus: Proteasome subunit beta type-3 (205 aa).

Position 2 is an N-acetylserine (Ser2). Lys77 is subject to N6-acetyllysine.

The protein belongs to the peptidase T1B family. As to quaternary structure, the 26S proteasome consists of a 20S proteasome core and two 19S regulatory subunits. The 20S proteasome core is a barrel-shaped complex made of 28 subunits that are arranged in four stacked rings. The two outer rings are each formed by seven alpha subunits, and the two inner rings are formed by seven beta subunits. The proteolytic activity is exerted by three beta-subunits PSMB5, PSMB6 and PSMB7. Detected in liver (at protein level).

It is found in the cytoplasm. The protein resides in the nucleus. In terms of biological role, non-catalytic component of the 20S core proteasome complex involved in the proteolytic degradation of most intracellular proteins. This complex plays numerous essential roles within the cell by associating with different regulatory particles. Associated with two 19S regulatory particles, forms the 26S proteasome and thus participates in the ATP-dependent degradation of ubiquitinated proteins. The 26S proteasome plays a key role in the maintenance of protein homeostasis by removing misfolded or damaged proteins that could impair cellular functions, and by removing proteins whose functions are no longer required. Associated with the PA200 or PA28, the 20S proteasome mediates ubiquitin-independent protein degradation. This type of proteolysis is required in several pathways including spermatogenesis (20S-PA200 complex) or generation of a subset of MHC class I-presented antigenic peptides (20S-PA28 complex). This Mus musculus (Mouse) protein is Proteasome subunit beta type-3 (Psmb3).